Consider the following 81-residue polypeptide: Delta-actitoxin-Aeq2d (81 aa).

The N-terminal stretch at Met-1–Ala-19 is a signal peptide. The propeptide occupies Asp-20–Ala-25. Cystine bridges form between Cys-31/Cys-78, Cys-33/Cys-68, and Cys-61/Cys-79.

The protein belongs to the sea anemone sodium channel inhibitory toxin family. Type I subfamily.

Its subcellular location is the secreted. It localises to the nematocyst. In terms of biological role, binds specifically to voltage-gated sodium channels (Nav), thereby delaying their inactivation during signal transduction. Causes death to crabs. The polypeptide is Delta-actitoxin-Aeq2d (Actinia equina (Beadlet anemone)).